Reading from the N-terminus, the 214-residue chain is GTP-binding nuclear protein Ran (214 aa).

The Small GTPase Ran-type domain maps to 6–170; sequence YIPQYKLILV…LWLARRLSNQ (165 aa). Residue 17–24 participates in GTP binding; sequence DGGVGKTT. The tract at residues 36 to 44 is switch-I; sequence KKYIPTLGV. GTP-binding positions include G67, 121–124, and 149–151; these read NKVD and SAR. A switch-II region spans residues 67-83; it reads GQEKFGGLRDGYYIKSD.

It belongs to the small GTPase superfamily. Ran family. Found in a nuclear export complex with RanGTP, exportin and pre-miRNA.

The protein localises to the nucleus. In terms of biological role, GTP-binding protein involved in nucleocytoplasmic transport. Required for the import of protein into the nucleus and also for RNA export. Involved in chromatin condensation and control of cell cycle. The protein is GTP-binding nuclear protein Ran of Plasmodium falciparum.